Consider the following 239-residue polypeptide: Endonuclease V (239 aa).

2 residues coordinate Mg(2+): D48 and D116.

This sequence belongs to the endonuclease V family. The cofactor is Mg(2+).

Its subcellular location is the cytoplasm. It carries out the reaction Endonucleolytic cleavage at apurinic or apyrimidinic sites to products with a 5'-phosphate.. Its function is as follows. DNA repair enzyme involved in the repair of deaminated bases. Selectively cleaves double-stranded DNA at the second phosphodiester bond 3' to a deoxyinosine leaving behind the intact lesion on the nicked DNA. The protein is Endonuclease V of Xanthomonas oryzae pv. oryzae (strain MAFF 311018).